Consider the following 166-residue polypeptide: MNYTTICLAFQLCVIFCSSGYYCQAMFFKEIEDLKEYFNASNPDVADGGPLFLDILKNWREESDKKIIQSQIVSFYLKLFENFKDNQIIQRSMDTIKEDMLVRFFNNSSSKLEDFLKLIRIPVNDLQVQRKAINELIKVMNDLSPRSNLRKRKRSHSLFRGRRASK.

The signal sequence occupies residues 1–23 (MNYTTICLAFQLCVIFCSSGYYC). A Pyrrolidone carboxylic acid modification is found at glutamine 24. Residues asparagine 39, asparagine 106, and asparagine 107 are each glycosylated (N-linked (GlcNAc...) asparagine).

It belongs to the type II (or gamma) interferon family. In terms of assembly, homodimer. Interacts with IFNGR1 (via extracellular domain); this interaction promotes IFNGR1 dimerization.

Its subcellular location is the secreted. Functionally, type II interferon produced by immune cells such as T-cells and NK cells that plays crucial roles in antimicrobial, antiviral, and antitumor responses by activating effector immune cells and enhancing antigen presentation. Primarily signals through the JAK-STAT pathway after interaction with its receptor IFNGR1 to affect gene regulation. Upon IFNG binding, IFNGR1 intracellular domain opens out to allow association of downstream signaling components JAK2, JAK1 and STAT1, leading to STAT1 activation, nuclear translocation and transcription of IFNG-regulated genes. Many of the induced genes are transcription factors such as IRF1 that are able to further drive regulation of a next wave of transcription. Plays a role in class I antigen presentation pathway by inducing a replacement of catalytic proteasome subunits with immunoproteasome subunits. In turn, increases the quantity, quality, and repertoire of peptides for class I MHC loading. Increases the efficiency of peptide generation also by inducing the expression of activator PA28 that associates with the proteasome and alters its proteolytic cleavage preference. Up-regulates as well MHC II complexes on the cell surface by promoting expression of several key molecules such as cathepsins B/CTSB, H/CTSH, and L/CTSL. Participates in the regulation of hematopoietic stem cells during development and under homeostatic conditions by affecting their development, quiescence, and differentiation. This is Interferon gamma (IFNG) from Mustela putorius furo (European domestic ferret).